The sequence spans 392 residues: Ceramide synthase 5 (392 aa).

Over 1 to 46 (MATAAQGPLSLLWGWLWSERFWLPENVSWADLEGPADGYGYPRGRH) the chain is Lumenal. N-linked (GlcNAc...) asparagine glycosylation occurs at Asn26. The chain crosses the membrane as a helical span at residues 47–67 (ILSVFPLAAGIFFVRLLFERF). The tract at residues 75–136 (CIGIEDSGPY…RHRRNQDKPP (62 aa)) is homeobox-like. The TLC domain maps to 139–340 (TKFCESMWRF…IARIALKALI (202 aa)). Helical transmembrane passes span 148–168 (FTFYLCIFCYGIRFLWSSPWF), 183–203 (LSSGLYHYYIMELAFYWSLMF), 214–234 (FLIMFVHHLVTIGLISFSYIN), and 272–292 (LFVIFSAVFMVTRLGIYPFWI). Positions 299–309 (ESWEIIGPYAS) match the Last loop motif motif. A helical transmembrane segment spans residues 311–331 (WLLNGLLLTLQLLHVIWSYLI). The Cytoplasmic portion of the chain corresponds to 332–392 (ARIALKALIR…HMGGSYWAEE (61 aa)). The disordered stretch occupies residues 349–392 (RSDVESSSEEEDVTTCTKSPCDSSSSNGANRVNGHMGGSYWAEE). Residues 362 to 378 (TTCTKSPCDSSSSNGAN) show a composition bias toward polar residues.

In terms of assembly, interacts with PAQR4; the interaction regulates the stability and activity of CERS5 and is inhibited in presence of ceramides. In terms of processing, phosphorylated at the C-terminus by CK2.

The protein resides in the endoplasmic reticulum membrane. The catalysed reaction is a sphingoid base + hexadecanoyl-CoA = an N-hexadecanoyl-sphingoid base + CoA + H(+). The enzyme catalyses sphinganine + hexadecanoyl-CoA = N-hexadecanoylsphinganine + CoA + H(+). It catalyses the reaction hexadecasphinganine + hexadecanoyl-CoA = N-hexadecanoylhexadecasphinganine + CoA + H(+). It carries out the reaction sphing-4-enine + hexadecanoyl-CoA = N-hexadecanoylsphing-4-enine + CoA + H(+). The catalysed reaction is 2-hydroxyhexadecanoyl-CoA + sphinganine = N-(2-hydroxyhexadecanoyl)-sphinganine + CoA + H(+). The enzyme catalyses sphinganine + tetradecanoyl-CoA = N-(tetradecanoyl)-sphinganine + CoA + H(+). It catalyses the reaction sphinganine + octadecanoyl-CoA = N-(octadecanoyl)-sphinganine + CoA + H(+). It carries out the reaction sphinganine + (9Z)-octadecenoyl-CoA = N-(9Z-octadecenoyl)-sphinganine + CoA + H(+). The catalysed reaction is a fatty acyl-CoA + sphing-4-enine = an N-acylsphing-4-enine + CoA + H(+). Its pathway is lipid metabolism; sphingolipid metabolism. With respect to regulation, inhibited by fumonisin B1. Ceramide synthase that catalyzes the transfer of the acyl chain from acyl-CoA to a sphingoid base, with high selectivity toward palmitoyl-CoA (hexadecanoyl-CoA; C16:0-CoA). Can use other acyl donors, but with less efficiency. N-acylates sphinganine and sphingosine bases to form dihydroceramides and ceramides in de novo synthesis and salvage pathways, respectively. Plays a role in de novo ceramide synthesis and surfactant homeostasis in pulmonary epithelia. The polypeptide is Ceramide synthase 5 (Homo sapiens (Human)).